The primary structure comprises 459 residues: uncharacterized protein (459 aa).

K285 carries the post-translational modification N6-(pyridoxal phosphate)lysine.

The protein belongs to the class-III pyridoxal-phosphate-dependent aminotransferase family.

Its subcellular location is the cytoplasm. This is an uncharacterized protein from Schizosaccharomyces pombe (strain 972 / ATCC 24843) (Fission yeast).